The sequence spans 68 residues: 1-carboxybiuret hydrolase subunit AtzG (68 aa).

As to quaternary structure, heterotetramer consisting of 2 AtzE and 2 AtzG subunits.

Its pathway is xenobiotic degradation; atrazine degradation. Its function is as follows. Important for the activity of the AtzE subunit of 1-carboxybiuret hydrolase. The protein is 1-carboxybiuret hydrolase subunit AtzG of Pseudomonas sp. (strain ADP).